Reading from the N-terminus, the 150-residue chain is Small ribosomal subunit protein eS19 (150 aa).

This sequence belongs to the eukaryotic ribosomal protein eS19 family. Part of the 30S ribosomal subunit.

May be involved in maturation of the 30S ribosomal subunit. The polypeptide is Small ribosomal subunit protein eS19 (Thermococcus kodakarensis (strain ATCC BAA-918 / JCM 12380 / KOD1) (Pyrococcus kodakaraensis (strain KOD1))).